The primary structure comprises 922 residues: Cell surface glycoprotein 2 (922 aa).

The N-terminal stretch at 1–23 is a signal peptide; the sequence is MTGNSDKVRSLFLTALMVFSVFA. N37, N56, N110, N220, N251, N262, and N292 each carry an N-linked (GlcNAc...) asparagine glycan. The N-linked (GalNAc...) asparagine glycan is linked to N307. N319, N344, N396, N437, N490, N523, N557, N574, N587, N616, N700, N717, N809, N838, and N847 each carry an N-linked (GlcNAc...) asparagine glycan. The disordered stretch occupies residues 816-899; it reads PHQDTNGNEE…GTETTEAEGP (84 aa). The span at 835–850 shows a compositional bias: polar residues; it reads YTQNGSAVTDSANVTV. Residues 853–887 show a composition bias toward acidic residues; the sequence is EEPEDTPEDTPEDTPEDTPEDTPEDTPADTPEDTP. The span at 888–899 shows a compositional bias: low complexity; that stretch reads DTGTETTEAEGP. Residues 898–918 form a helical membrane-spanning segment; it reads GPGFTAAIALIALVAAALLAV. The PGF sorting signal signature appears at 899-901; the sequence is PGF.

This sequence belongs to the halobacterial S-layer protein family. In terms of processing, N-glycosylated on Asn-307; this N-linked glycan is a branched trisaccharide containing 2-amino-6-sulfo-2,6-dideoxy-glucose (sulfoquinovosamine). Post-translationally, O-glycosylated on Thr residues within the DTPE repeats in the C-terminal region; glycans consist of Glc-Gal disaccharides. Cleaved by the archaeosortase ArtA at the C-terminus, with removal of a short hydrophobic segment. In terms of processing, lipidation.

Its subcellular location is the secreted. The protein localises to the cell wall. The protein resides in the S-layer. It localises to the cell membrane. Its function is as follows. S-layer protein. The S-layer is a paracrystalline mono-layered assembly of proteins which coat the surface of the cell. In H.hispanica, the S-layer contains two different glycoproteins, Slg1 and Slg2, which share highly similar amino acid sequences. This Haloarcula hispanica (strain ATCC 33960 / DSM 4426 / JCM 8911 / NBRC 102182 / NCIMB 2187 / VKM B-1755) protein is Cell surface glycoprotein 2.